We begin with the raw amino-acid sequence, 619 residues long: 1-deoxy-D-xylulose-5-phosphate synthase (619 aa).

Thiamine diphosphate is bound by residues His63 and 104–106 (GHS). Asp136 is a Mg(2+) binding site. Thiamine diphosphate-binding positions include 137–138 (GS), Asn165, Tyr272, and Glu353. A Mg(2+)-binding site is contributed by Asn165.

Belongs to the transketolase family. DXPS subfamily. Homodimer. It depends on Mg(2+) as a cofactor. Thiamine diphosphate is required as a cofactor.

It carries out the reaction D-glyceraldehyde 3-phosphate + pyruvate + H(+) = 1-deoxy-D-xylulose 5-phosphate + CO2. The protein operates within metabolic intermediate biosynthesis; 1-deoxy-D-xylulose 5-phosphate biosynthesis; 1-deoxy-D-xylulose 5-phosphate from D-glyceraldehyde 3-phosphate and pyruvate: step 1/1. In terms of biological role, catalyzes the acyloin condensation reaction between C atoms 2 and 3 of pyruvate and glyceraldehyde 3-phosphate to yield 1-deoxy-D-xylulose-5-phosphate (DXP). The chain is 1-deoxy-D-xylulose-5-phosphate synthase from Wolinella succinogenes (strain ATCC 29543 / DSM 1740 / CCUG 13145 / JCM 31913 / LMG 7466 / NCTC 11488 / FDC 602W) (Vibrio succinogenes).